The primary structure comprises 413 residues: Peptide chain release factor 1, mitochondrial (413 aa).

The residue at position 287 (Gln287) is an N5-methylglutamine. Residues 335–363 are disordered; the sequence is RLEKEEKERKARKSQVSSTNRSDKIRTYN.

It belongs to the prokaryotic/mitochondrial release factor family. Methylation of glutamine in the GGQ triplet is conserved from bacteria to mammals. N5-methylated on Gln-287 by MTQ1.

It localises to the mitochondrion. Functionally, mitochondrial peptide chain release factor that directs the termination of translation in response to the peptide chain termination codons UAA and UAG. The protein is Peptide chain release factor 1, mitochondrial (MRF1) of Saccharomyces cerevisiae (strain ATCC 204508 / S288c) (Baker's yeast).